A 673-amino-acid polypeptide reads, in one-letter code: Flotillin family inner membrane protein sll1021 (673 aa).

A helical membrane pass occupies residues 60-80 (LLFFPVVIIAVIFLILVTIFL). The disordered stretch occupies residues 639–673 (LQDPPSVSPPSAAVSEDDWPDLAPPTETNFSPEEI). A compositionally biased stretch (polar residues) spans 664–673 (TETNFSPEEI).

This sequence belongs to the band 7/mec-2 family. Flotillin subfamily. In terms of assembly, homooligomerizes.

The protein localises to the cell inner membrane. The protein resides in the membrane raft. In terms of biological role, found in functional membrane microdomains (FMM) that may be equivalent to eukaryotic membrane rafts. FMMs are highly dynamic and increase in number as cells age. Flotillins are thought to be important factors in membrane fluidity. The chain is Flotillin family inner membrane protein sll1021 from Synechocystis sp. (strain ATCC 27184 / PCC 6803 / Kazusa).